We begin with the raw amino-acid sequence, 228 residues long: HTH-type transcriptional regulator ArcR (228 aa).

An a nucleoside 3',5'-cyclic phosphate-binding site is contributed by 22 to 141; sequence SYINIPVGVL…VKLFSLLSET (120 aa). In terms of domain architecture, HTH crp-type spans 155–228; sequence KLAKERVTKI…SKNWLVSKDL (74 aa). Positions 188–207 form a DNA-binding region, H-T-H motif; the sequence is IQLLSDMAGISRETTSHIIN.

Its subcellular location is the cytoplasm. Positively regulates the expression of the arcABDCR operon under anaerobic conditions, thus playing an essential role in arginine catabolism. May also control the expression of genes encoding proteins which are involved in anaerobic metabolism. Can bind cyclic AMP. The sequence is that of HTH-type transcriptional regulator ArcR (arcR) from Staphylococcus epidermidis (strain ATCC 35984 / DSM 28319 / BCRC 17069 / CCUG 31568 / BM 3577 / RP62A).